We begin with the raw amino-acid sequence, 809 residues long: Origin of replication complex subunit 1A (809 aa).

A compositionally biased stretch (low complexity) spans 1–47 (MASSLSSKAKTFKSPTKTPTKMYRKSYLSPSSTSLTPPQTPETLTPL). The interval 1–69 (MASSLSSKAK…LGNDPIDLPG (69 aa)) is disordered. The segment at 160 to 185 (DPEIEDCQICFKSHTNTIMIECDDCL) is histone H3 binding. The PHD-type zinc finger occupies 163–213 (IEDCQICFKSHTNTIMIECDDCLGGFHLNCLKPPLKEVPEGDWICQFCEVK). 6 residues coordinate Zn(2+): Cys166, Cys169, Cys181, Cys184, His189, and Cys192. The interval 201–205 (PEGDW) is histone H3 binding. Zn(2+) contacts are provided by Cys207 and Cys210. The region spanning 223–341 (PKPPEGKKLA…VHWGSFKRVA (119 aa)) is the BAH domain. Residues 316–321 (ASNDGD) form a histone H3 binding region. Residues 431 to 799 (PKSLPCRSKE…DDVAFALKDN (369 aa)) are necessary and sufficient for ORC complex assembly. Residues 466–473 (GVPGTGKT) and 466–474 (GVPGTGKTI) contribute to the ATP site. Mg(2+) contacts are provided by Asp556 and Glu557. 3 residues coordinate ATP: Glu557, Asn590, and Arg655.

The protein belongs to the ORC1 family. In terms of assembly, component of the origin recognition complex (ORC) composed of at least ORC1 (ORC1A or ORC1B), ORC2, ORC3, ORC4, ORC5 and ORC6. ORC is regulated in a cell-cycle and development dependent manner. It is sequentially assembled at the exit from anaphase of mitosis and disassembled as cells enter S phase. Interacts directly with ORC2, ORC3, ORC4 and ORC5. Binds mostly unmodified histone H3, and, with lower efficiency, H3K4me1 H3K4me2 and H3K4me3. Follow a cell-cycle regulation with a peak at the G1/S-phase. Mostly expressed in siliques, flowers and flower buds, and, to a lower extent, in roots, leaves and stems.

It is found in the nucleus. Its function is as follows. Essential protein. Component of the origin recognition complex (ORC) that binds origins of replication. It has a role in both chromosomal replication and mating type transcriptional silencing. Binds to the ARS consensus sequence (ACS) of origins of replication. H3K4me3 effector that positively regulates the transcription of a subset of genes. In Arabidopsis thaliana (Mouse-ear cress), this protein is Origin of replication complex subunit 1A.